The sequence spans 346 residues: Transposase for insertion sequence element IS1533 (346 aa).

The protein belongs to the transposase IS1111A/IS1328/IS1533 family.

Required for the transposition of the insertion element. The chain is Transposase for insertion sequence element IS1533 (tnhA) from Leptospira borgpetersenii.